A 444-amino-acid polypeptide reads, in one-letter code: Ribosomal protein uS12 methylthiotransferase RimO (444 aa).

One can recognise an MTTase N-terminal domain in the interval 6-116 (PNIGFVSLGC…VMEHVHKYVP (111 aa)). [4Fe-4S] cluster-binding residues include Cys-15, Cys-51, Cys-80, Cys-148, Cys-152, and Cys-155. In terms of domain architecture, Radical SAM core spans 134-375 (LTPKHYAYLK…MQLQQEISAA (242 aa)). Residues 378 to 444 (QQKIGKTWKV…ADEYDLWGTC (67 aa)) form the TRAM domain.

This sequence belongs to the methylthiotransferase family. RimO subfamily. [4Fe-4S] cluster is required as a cofactor.

The protein localises to the cytoplasm. It carries out the reaction L-aspartate(89)-[ribosomal protein uS12]-hydrogen + (sulfur carrier)-SH + AH2 + 2 S-adenosyl-L-methionine = 3-methylsulfanyl-L-aspartate(89)-[ribosomal protein uS12]-hydrogen + (sulfur carrier)-H + 5'-deoxyadenosine + L-methionine + A + S-adenosyl-L-homocysteine + 2 H(+). In terms of biological role, catalyzes the methylthiolation of an aspartic acid residue of ribosomal protein uS12. The chain is Ribosomal protein uS12 methylthiotransferase RimO from Actinobacillus succinogenes (strain ATCC 55618 / DSM 22257 / CCUG 43843 / 130Z).